Here is a 162-residue protein sequence, read N- to C-terminus: UPF0114 protein Sputw3181_3501 (162 aa).

Helical transmembrane passes span 15-35, 53-73, and 136-156; these read IMAP…IKFF, LVLV…IVMV, and IMWY…MGYL.

The protein belongs to the UPF0114 family.

Its subcellular location is the cell membrane. The chain is UPF0114 protein Sputw3181_3501 from Shewanella sp. (strain W3-18-1).